Reading from the N-terminus, the 339-residue chain is Ferredoxin--NADP reductase (339 aa).

FAD is bound by residues glutamate 35, glutamine 43, tyrosine 48, valine 88, phenylalanine 122, aspartate 287, and serine 327.

The protein belongs to the ferredoxin--NADP reductase type 2 family. As to quaternary structure, homodimer. FAD serves as cofactor.

The enzyme catalyses 2 reduced [2Fe-2S]-[ferredoxin] + NADP(+) + H(+) = 2 oxidized [2Fe-2S]-[ferredoxin] + NADPH. The sequence is that of Ferredoxin--NADP reductase from Leuconostoc citreum (strain KM20).